Reading from the N-terminus, the 422-residue chain is Serine protease HTRA2, mitochondrial (422 aa).

The N-terminal 17 residues, 1-17 (MALRGCHRLEVIFKRCI), are a transit peptide targeting the mitochondrion. The propeptide occupies 18-74 (ASPVLHSQAGNRRSSQLAIKGVDPNSNGNSGQYQQNGEHKEKGWRRLVRFFVPFSLG). Residues 33–55 (QLAIKGVDPNSNGNSGQYQQNGE) form a disordered region. Positions 42 to 53 (NSNGNSGQYQQN) are enriched in low complexity. The chain crosses the membrane as a helical span at residues 64–82 (LVRFFVPFSLGAAVSAAII). 2 consecutive short sequence motifs (IAP-binding) follow at residues 75–78 (AAVS) and 94–97 (SKMT). The segment at 139-302 (SNGSGFIIEQ…IPIDYVKVFL (164 aa)) is serine protease. Residues His-157, Asp-189, and Ser-266 each act as charge relay system in the active site. The region spanning 325–410 (MGITMLTLTP…TLDIVILRGV (86 aa)) is the PDZ domain.

The protein belongs to the peptidase S1C family. As to quaternary structure, interacts with th/DIAP1 (via BIR 2 domain).

The protein resides in the mitochondrion intermembrane space. Its subcellular location is the mitochondrion membrane. The enzyme catalyses Cleavage of non-polar aliphatic amino-acids at the P1 position, with a preference for Val, Ile and Met. At the P2 and P3 positions, Arg is selected most strongly with a secondary preference for other hydrophilic residues.. Its function is as follows. Serine protease that shows proteolytic activity against a non-specific substrate beta-casein. Promotes or induces cell death either by direct binding to and inhibition of BIRC proteins (also called inhibitor of apoptosis proteins, IAPs), leading to an increase in caspase activity, or by a BIRC inhibition-independent, caspase-independent and serine protease activity-dependent mechanism. Can antagonize antiapoptotic activity of th/Diap1 by directly inducing the degradation of th/Diap1. The chain is Serine protease HTRA2, mitochondrial from Drosophila simulans (Fruit fly).